The following is a 348-amino-acid chain: Probable dual-specificity RNA methyltransferase RlmN (348 aa).

The Proton acceptor role is filled by Glu93. One can recognise a Radical SAM core domain in the interval Thr99–Asp333. Cysteines 106 and 338 form a disulfide. 3 residues coordinate [4Fe-4S] cluster: Cys113, Cys117, and Cys120. Residues Gly160 to Glu161, Ser190, Ser219 to His221, and Asn295 each bind S-adenosyl-L-methionine. The active-site S-methylcysteine intermediate is the Cys338.

The protein belongs to the radical SAM superfamily. RlmN family. [4Fe-4S] cluster is required as a cofactor.

It is found in the cytoplasm. It catalyses the reaction adenosine(2503) in 23S rRNA + 2 reduced [2Fe-2S]-[ferredoxin] + 2 S-adenosyl-L-methionine = 2-methyladenosine(2503) in 23S rRNA + 5'-deoxyadenosine + L-methionine + 2 oxidized [2Fe-2S]-[ferredoxin] + S-adenosyl-L-homocysteine. The catalysed reaction is adenosine(37) in tRNA + 2 reduced [2Fe-2S]-[ferredoxin] + 2 S-adenosyl-L-methionine = 2-methyladenosine(37) in tRNA + 5'-deoxyadenosine + L-methionine + 2 oxidized [2Fe-2S]-[ferredoxin] + S-adenosyl-L-homocysteine. Functionally, specifically methylates position 2 of adenine 2503 in 23S rRNA and position 2 of adenine 37 in tRNAs. The polypeptide is Probable dual-specificity RNA methyltransferase RlmN (Prochlorococcus marinus (strain AS9601)).